We begin with the raw amino-acid sequence, 72 residues long: Translation initiation factor IF-1 1 (72 aa).

Positions 1 to 72 (MAKEDRIEMQ…SRARIIFRAK (72 aa)) constitute an S1-like domain.

The protein belongs to the IF-1 family. In terms of assembly, component of the 30S ribosomal translation pre-initiation complex which assembles on the 30S ribosome in the order IF-2 and IF-3, IF-1 and N-formylmethionyl-tRNA(fMet); mRNA recruitment can occur at any time during PIC assembly.

Its subcellular location is the cytoplasm. In terms of biological role, one of the essential components for the initiation of protein synthesis. Stabilizes the binding of IF-2 and IF-3 on the 30S subunit to which N-formylmethionyl-tRNA(fMet) subsequently binds. Helps modulate mRNA selection, yielding the 30S pre-initiation complex (PIC). Upon addition of the 50S ribosomal subunit IF-1, IF-2 and IF-3 are released leaving the mature 70S translation initiation complex. In Methylobacillus flagellatus (strain ATCC 51484 / DSM 6875 / VKM B-1610 / KT), this protein is Translation initiation factor IF-1 1.